A 280-amino-acid polypeptide reads, in one-letter code: Proteasome subunit beta 2 (280 aa).

A propeptide spans 1 to 52 (removed in mature form; by autocatalysis); the sequence is MTERERGQGLPAEFFAVGTASFVELLSRTAPQLLPVNRVRDGSHPMPDIPHG. The active-site Nucleophile is the threonine 53.

The protein belongs to the peptidase T1B family. The 20S proteasome core is composed of 14 alpha and 14 beta subunits that assemble into four stacked heptameric rings, resulting in a barrel-shaped structure. The two inner rings, each composed of seven catalytic beta subunits, are sandwiched by two outer rings, each composed of seven alpha subunits. The catalytic chamber with the active sites is on the inside of the barrel. Has a gated structure, the ends of the cylinder being occluded by the N-termini of the alpha-subunits. Is capped by the proteasome-associated ATPase, ARC.

It is found in the cytoplasm. It carries out the reaction Cleavage of peptide bonds with very broad specificity.. It functions in the pathway protein degradation; proteasomal Pup-dependent pathway. Its activity is regulated as follows. The formation of the proteasomal ATPase ARC-20S proteasome complex, likely via the docking of the C-termini of ARC into the intersubunit pockets in the alpha-rings, may trigger opening of the gate for substrate entry. Interconversion between the open-gate and close-gate conformations leads to a dynamic regulation of the 20S proteasome proteolysis activity. In terms of biological role, component of the proteasome core, a large protease complex with broad specificity involved in protein degradation. This chain is Proteasome subunit beta 2, found in Thermomonospora curvata (strain ATCC 19995 / DSM 43183 / JCM 3096 / KCTC 9072 / NBRC 15933 / NCIMB 10081 / Henssen B9).